Here is a 582-residue protein sequence, read N- to C-terminus: TBCC domain-containing protein 1 (582 aa).

Residues 140–153 (EWPSPRSRSPSSSS) are compositionally biased toward low complexity. A disordered region spans residues 140–159 (EWPSPRSRSPSSSSSERDAK). In terms of domain architecture, C-CAP/cofactor C-like spans 305-451 (PPGSRLVLMS…LWNQPLLFGV (147 aa)). A compositionally biased stretch (low complexity) spans 547–558 (SLLPPTITPSSS). The disordered stretch occupies residues 547-582 (SLLPPTITPSSSAEHWSSNQNTLKEQTHEQPTGTVC). A compositionally biased stretch (polar residues) spans 559–582 (AEHWSSNQNTLKEQTHEQPTGTVC).

The protein belongs to the TBCC family.

Its subcellular location is the cytoplasm. It is found in the cytoskeleton. The protein localises to the microtubule organizing center. The protein resides in the centrosome. It localises to the spindle pole. May play a role in the regulation of centrosome and Golgi apparatus positioning. This Danio rerio (Zebrafish) protein is TBCC domain-containing protein 1 (tbccd1).